The primary structure comprises 458 residues: O-acetyltransferase dmxR13 (458 aa).

The tract at residues 211-231 is disordered; sequence ELARQISQPRPPPSSDGPPPP. Over residues 219-231 the composition is skewed to pro residues; sequence PRPPPSSDGPPPP.

It belongs to the trichothecene 3-O-acetyltransferase family.

It functions in the pathway secondary metabolite biosynthesis. O-acetyltransferase; part of the gene cluster that mediates the biosynthesis of the dimeric xanthones cryptosporioptides. The pathway begins with the synthesis of atrochrysone thioester by the polyketide synthase dmx-nrPKS. The atrochrysone carboxyl ACP thioesterase dmxR1 then breaks the thioester bond and releases the atrochrysone carboxylic acid from dmx-nrPKS. Atrochrysone carboxylic acid is decarboxylated by the decarboxylase dmxR15, and oxidized by the anthrone oxygenase dmxR16 to yield emodin. Emodin is then reduced to emodin hydroquinone by the oxidoreductase dmxR7. A-ring reduction by the short chain dehydrogenase dmxR18, dehydration by the scytalone dehydratase-like protein dmxR17 and probable spontaneous re-oxidation, results in overall deoxygenation to chrysophanol. Baeyer-Villiger oxidation by the Baeyer-Villiger monooxygenase (BVMO) dmxR6 then yields monodictylactone in equilibrium with monodictyphenone. In the case of the cryptosporioptides biosynthesis, monodictylactone is reduced at C-12 to an alcohol (by the short chain dehydrogenases dmxR12 or dmxR8) and hydroxylated at C-5 by dmxR9, yielding the electron-rich aromatic which could eliminate H(2)O to form the ortho-quinonemethide, followed by tautomerisation to paraquinone and complete the formal reduction to produce the 10-methylgroup. Conjugate addition of C-4a-OH to the resulting paraquinone by the monooxygenase dmxR10 then gives cyclohexadienone, which is then reduced at C-5 by the short chain dehydrogenase dmxR3 to give the dihydroxanthone. The 6,7-epoxide in the cryptosporioptides could be introduced by the cytochrome P450 monooxygenase dmxL3. The highly reducing PKS dmxL2 manufactures butyrate, which is further carboxylated by dmxL1 to form ethylmalonate. It is not yet clear whether the carboxylation occurs while the butyrate is attached to the ACP of dmxL2, but this unusual fungal metabolite could then be esterified to O-5 by the O-acetyltransferase dmxR13. Finally, dimerization performed by dmxR5 gives the observed dimers cryptosporioptides A, B and C as the final products of the pathway. The sequence is that of O-acetyltransferase dmxR13 from Cryptosporiopsis sp. (strain 8999).